Reading from the N-terminus, the 88-residue chain is Small ribosomal subunit protein bS20 (88 aa).

Positions 69 to 88 (KNTASRKKSRLTKRFNKLTG) are disordered. The span at 71–88 (TASRKKSRLTKRFNKLTG) shows a compositional bias: basic residues.

Belongs to the bacterial ribosomal protein bS20 family.

Functionally, binds directly to 16S ribosomal RNA. The polypeptide is Small ribosomal subunit protein bS20 (Pelotomaculum thermopropionicum (strain DSM 13744 / JCM 10971 / SI)).